A 689-amino-acid chain; its full sequence is DNA topoisomerase 1 (689 aa).

In terms of domain architecture, Toprim spans 3-113 (DNLVIVESPA…KENRVVFNEI (111 aa)). Mg(2+) is bound by residues Glu-9 and Asp-82. The Topo IA-type catalytic domain maps to 129-557 (EMDLVDAQQA…FYNSFKQDVE (429 aa)). The interval 163-168 (SAGRVQ) is interaction with DNA. Catalysis depends on Tyr-298, which acts as the O-(5'-phospho-DNA)-tyrosine intermediate. 3 C4-type zinc fingers span residues 577–603 (CEVC…FPDC), 617–645 (CPKC…YPEC), and 658–681 (CPKC…CSNC).

This sequence belongs to the type IA topoisomerase family. In terms of assembly, monomer. Requires Mg(2+) as cofactor.

It catalyses the reaction ATP-independent breakage of single-stranded DNA, followed by passage and rejoining.. In terms of biological role, releases the supercoiling and torsional tension of DNA, which is introduced during the DNA replication and transcription, by transiently cleaving and rejoining one strand of the DNA duplex. Introduces a single-strand break via transesterification at a target site in duplex DNA. The scissile phosphodiester is attacked by the catalytic tyrosine of the enzyme, resulting in the formation of a DNA-(5'-phosphotyrosyl)-enzyme intermediate and the expulsion of a 3'-OH DNA strand. The free DNA strand then undergoes passage around the unbroken strand, thus removing DNA supercoils. Finally, in the religation step, the DNA 3'-OH attacks the covalent intermediate to expel the active-site tyrosine and restore the DNA phosphodiester backbone. The sequence is that of DNA topoisomerase 1 from Staphylococcus epidermidis (strain ATCC 35984 / DSM 28319 / BCRC 17069 / CCUG 31568 / BM 3577 / RP62A).